Reading from the N-terminus, the 96-residue chain is UPF0235 protein VV1_1522 (96 aa).

The protein belongs to the UPF0235 family.

The chain is UPF0235 protein VV1_1522 from Vibrio vulnificus (strain CMCP6).